A 489-amino-acid chain; its full sequence is 3-octaprenyl-4-hydroxybenzoate carboxy-lyase (489 aa).

Asparagine 172 provides a ligand contact to Mn(2+). Prenylated FMN-binding positions include 175–177 (IYR), 189–191 (RWL), and 194–195 (RG). Glutamate 238 provides a ligand contact to Mn(2+). Residue aspartate 287 is the Proton donor of the active site.

The protein belongs to the UbiD family. In terms of assembly, homohexamer. It depends on prenylated FMN as a cofactor. Requires Mn(2+) as cofactor.

The protein resides in the cell membrane. It catalyses the reaction a 4-hydroxy-3-(all-trans-polyprenyl)benzoate + H(+) = a 2-(all-trans-polyprenyl)phenol + CO2. It participates in cofactor biosynthesis; ubiquinone biosynthesis. Its function is as follows. Catalyzes the decarboxylation of 3-octaprenyl-4-hydroxy benzoate to 2-octaprenylphenol, an intermediate step in ubiquinone biosynthesis. This is 3-octaprenyl-4-hydroxybenzoate carboxy-lyase from Aeromonas salmonicida (strain A449).